Consider the following 90-residue polypeptide: Small ribosomal subunit protein bS20 (90 aa).

A compositionally biased stretch (polar residues) spans 1 to 10 (MANHKSTQKS). Residues 1-25 (MANHKSTQKSIRQDQKRNLINKSRK) are disordered.

The protein belongs to the bacterial ribosomal protein bS20 family.

Its function is as follows. Binds directly to 16S ribosomal RNA. In Orientia tsutsugamushi (strain Ikeda) (Rickettsia tsutsugamushi), this protein is Small ribosomal subunit protein bS20.